A 1025-amino-acid polypeptide reads, in one-letter code: Exportin-T (1025 aa).

It belongs to the exportin family.

It localises to the nucleus. It is found in the cytoplasm. Its function is as follows. tRNA nucleus export receptor which facilitates tRNA translocation across the nuclear pore complex. Involved in pre-tRNA splicing, probably by affecting the interaction of pre-tRNA with splicing endonuclease. The chain is Exportin-T (LOS1) from Candida albicans (strain SC5314 / ATCC MYA-2876) (Yeast).